Here is a 144-residue protein sequence, read N- to C-terminus: Monooxygenase ptaG (144 aa).

The protein belongs to the avfA family.

The protein operates within secondary metabolite biosynthesis. In terms of biological role, monooxygenase; part of the gene cluster that mediates the biosynthesis of pestheic acid, a diphenyl ether which is a biosynthetic precursor of the unique chloropupukeananes. The biosynthesis initiates from condensation of acetate and malonate units catalyzed by the non-reducing PKS ptaA. As the ptaA protein is TE/CLC domain-deficient, hydrolysis and Claisen cyclization of the polyketide could be catalyzed by ptaB containing a beta-lactamase domain. The ptaB protein might hydrolyze the thioester bond between the ACP of ptaA and the intermediate to release atrochrysone carboxylic acid, which is spontaneously dehydrated to form endocrocin anthrone. Endocrocin anthrone is then converted to endocrocin, catalyzed by the anthrone oxygenase ptaC. Spontaneous decarboxylation of endocrocin occurs to generate emodin. An O-methyltransferase (ptaH or ptaI) could methylate emodin to form physcion. PtaJ could then catalyze the oxidative cleavage of physcion, and rotation of the intermediate could then afford desmethylisosulochrin. PtaF, a putative NADH-dependent oxidoreductase, might also participate in the oxidative cleavage step. Desmethylisosulochrin is then transformed by another O-methyltransferase (ptaH or ptaI) to form isosulochrin. Chlorination of isosulochrin by ptaM in the cyclohexadienone B ring then produces chloroisosulochrin. PtaE is responsible for the oxidative coupling reactions of both benzophenones isosulochrin and chloroisosulochrin to RES-1214-1 and pestheic acid respectively, regardless of chlorination. This chain is Monooxygenase ptaG, found in Pestalotiopsis fici (strain W106-1 / CGMCC3.15140).